A 356-amino-acid chain; its full sequence is tRNA N6-adenosine threonylcarbamoyltransferase (356 aa).

2 residues coordinate Fe cation: H115 and H119. Residues 138 to 142 (LVSGG), D171, G184, and N283 each bind substrate. D311 is a Fe cation binding site.

This sequence belongs to the KAE1 / TsaD family. It depends on Fe(2+) as a cofactor.

It is found in the cytoplasm. It catalyses the reaction L-threonylcarbamoyladenylate + adenosine(37) in tRNA = N(6)-L-threonylcarbamoyladenosine(37) in tRNA + AMP + H(+). Its function is as follows. Required for the formation of a threonylcarbamoyl group on adenosine at position 37 (t(6)A37) in tRNAs that read codons beginning with adenine. Is involved in the transfer of the threonylcarbamoyl moiety of threonylcarbamoyl-AMP (TC-AMP) to the N6 group of A37, together with TsaE and TsaB. TsaD likely plays a direct catalytic role in this reaction. The sequence is that of tRNA N6-adenosine threonylcarbamoyltransferase from Prochlorococcus marinus (strain AS9601).